The primary structure comprises 339 residues: Heat-inducible transcription repressor HrcA (339 aa).

Belongs to the HrcA family.

Negative regulator of class I heat shock genes (grpE-dnaK-dnaJ and groELS operons). Prevents heat-shock induction of these operons. The polypeptide is Heat-inducible transcription repressor HrcA (Clostridium perfringens (strain 13 / Type A)).